We begin with the raw amino-acid sequence, 142 residues long: Large ribosomal subunit protein uL13 (142 aa).

The protein belongs to the universal ribosomal protein uL13 family. As to quaternary structure, part of the 50S ribosomal subunit.

Functionally, this protein is one of the early assembly proteins of the 50S ribosomal subunit, although it is not seen to bind rRNA by itself. It is important during the early stages of 50S assembly. This Histophilus somni (strain 129Pt) (Haemophilus somnus) protein is Large ribosomal subunit protein uL13.